We begin with the raw amino-acid sequence, 259 residues long: UPF0246 protein VSAL_I2547 (259 aa).

Belongs to the UPF0246 family.

This Aliivibrio salmonicida (strain LFI1238) (Vibrio salmonicida (strain LFI1238)) protein is UPF0246 protein VSAL_I2547.